Reading from the N-terminus, the 367-residue chain is Phospho-N-acetylmuramoyl-pentapeptide-transferase (367 aa).

10 helical membrane passes run 34–54 (GAVV…IDHL), 78–98 (TPTM…VLWA), 101–121 (LNPY…VGFY), 135–155 (FGSK…CYAL), 175–195 (TVLH…VGAG), 206–226 (GLAI…AYLA), 246–266 (LAVL…FNAP), 270–290 (IFMG…IAVA), 295–315 (IVLA…IVQV), and 344–364 (QIVI…LSTL).

It belongs to the glycosyltransferase 4 family. MraY subfamily. Mg(2+) serves as cofactor.

Its subcellular location is the cell inner membrane. It catalyses the reaction UDP-N-acetyl-alpha-D-muramoyl-L-alanyl-gamma-D-glutamyl-meso-2,6-diaminopimeloyl-D-alanyl-D-alanine + di-trans,octa-cis-undecaprenyl phosphate = di-trans,octa-cis-undecaprenyl diphospho-N-acetyl-alpha-D-muramoyl-L-alanyl-D-glutamyl-meso-2,6-diaminopimeloyl-D-alanyl-D-alanine + UMP. The protein operates within cell wall biogenesis; peptidoglycan biosynthesis. Catalyzes the initial step of the lipid cycle reactions in the biosynthesis of the cell wall peptidoglycan: transfers peptidoglycan precursor phospho-MurNAc-pentapeptide from UDP-MurNAc-pentapeptide onto the lipid carrier undecaprenyl phosphate, yielding undecaprenyl-pyrophosphoryl-MurNAc-pentapeptide, known as lipid I. In Bradyrhizobium diazoefficiens (strain JCM 10833 / BCRC 13528 / IAM 13628 / NBRC 14792 / USDA 110), this protein is Phospho-N-acetylmuramoyl-pentapeptide-transferase.